A 1759-amino-acid chain; its full sequence is Protein TIC 214 (1759 aa).

The next 5 helical transmembrane spans lie at 23–45 (VVVGLYYGFMTTFSIGPSYLFLL), 64–84 (FITGQLIIFMSIYYAPLHLAL), 129–149 (IFFQNLLFQFFNPLFLPSSIF), 172–192 (IGWIIGHTFFMKWIEFLLICI), and 221–241 (IFVVFLFVTCLYYLGRIPPPF).

The protein belongs to the TIC214 family. In terms of assembly, part of the Tic complex.

It is found in the plastid. The protein resides in the chloroplast inner membrane. Involved in protein precursor import into chloroplasts. May be part of an intermediate translocation complex acting as a protein-conducting channel at the inner envelope. The protein is Protein TIC 214 of Phaseolus vulgaris (Kidney bean).